Reading from the N-terminus, the 210-residue chain is Thymidylate kinase (210 aa).

11–18 (GLEGAGKS) contacts ATP.

This sequence belongs to the thymidylate kinase family.

It catalyses the reaction dTMP + ATP = dTDP + ADP. Phosphorylation of dTMP to form dTDP in both de novo and salvage pathways of dTTP synthesis. This is Thymidylate kinase from Histophilus somni (strain 129Pt) (Haemophilus somnus).